An 89-amino-acid chain; its full sequence is Small ribosomal subunit protein uS15 (89 aa).

The protein belongs to the universal ribosomal protein uS15 family. In terms of assembly, part of the 30S ribosomal subunit. Forms a bridge to the 50S subunit in the 70S ribosome, contacting the 23S rRNA.

In terms of biological role, one of the primary rRNA binding proteins, it binds directly to 16S rRNA where it helps nucleate assembly of the platform of the 30S subunit by binding and bridging several RNA helices of the 16S rRNA. Forms an intersubunit bridge (bridge B4) with the 23S rRNA of the 50S subunit in the ribosome. This is Small ribosomal subunit protein uS15 from Caulobacter sp. (strain K31).